The primary structure comprises 224 residues: Propanediol dehydratase medium subunit (224 aa).

Residues 1–18 (MEINEKLLRQIIEDVLRD) form a targets protein to the BMC region.

Belongs to the diol/glycerol dehydratase medium subunit family. As to quaternary structure, the propanediol dehydratase enzyme is a heterotrimeric complex composed of a large (PduC), a medium (PduD) and a small (PduE) subunit. The cofactor is adenosylcob(III)alamin.

The protein resides in the bacterial microcompartment. It carries out the reaction propane-1,2-diol = propanal + H2O. It participates in polyol metabolism; 1,2-propanediol degradation. Inhibited by glycerol. Part of the PduCDE complex that catalyzes the dehydration of 1,2-propanediol (1,2-PD) to propionaldehyde. Required for S.typhimurium growth on 1,2-PD as the sole carbon and energy source. This subunit is directly targeted to the bacterial microcompartment (BMC) dedicated to 1,2-PD degradation, and is also responsible for targeting the other 2 subunits (pduC and pduE). Its function is as follows. The 1,2-PD-specific bacterial microcompartment (BMC) concentrates low levels of 1,2-PD catabolic enzymes, concentrates volatile reaction intermediates thus enhancing pathway flux and keeps the level of toxic, mutagenic propionaldehyde low. This is Propanediol dehydratase medium subunit from Salmonella typhimurium (strain LT2 / SGSC1412 / ATCC 700720).